Here is a 31-residue protein sequence, read N- to C-terminus: CKMSEQGLNAQMKAQIVDLHNXARQGVANGQ.

This sequence belongs to the CRISP family. Venom allergen 5-like subfamily. Post-translationally, contains 3 disulfide bonds. As to expression, expressed by the venom gland.

The protein resides in the secreted. The chain is Scolopendra 20566.01 Da toxin from Scolopendra angulata (Barbados giant red centipede).